The sequence spans 2321 residues: Major viral transcription factor ICP4 homolog (2321 aa).

7 disordered regions span residues 19–183, 296–329, 350–438, 954–1180, 1360–1392, 1597–1841, and 2277–2321; these read GIFP…SPPL, ILHT…PAPI, EFIQ…PSLG, MDDD…SGLA, DNSS…APPH, LLND…PSCY, and QHEE…TFTD. A compositionally biased stretch (low complexity) spans 114–147; the sequence is SSNRPGGRNSSNGADESGESSSDRSPSYSPCDSY. 2 stretches are compositionally biased toward pro residues: residues 302–329 and 355–367; these read PTPP…PAPI and QSPP…PSPP. The segment covering 368–389 has biased composition (low complexity); it reads AHSSSSCSPSHLAPSPLSSSPL. Pro residues predominate over residues 390–410; sequence SSPPQLSPAPVSPPSSPPPLS. Composition is skewed to polar residues over residues 424-433 and 1002-1011; these read SISSQPQSCP and PRLTTPSSGR. Residues 1031–1093 are compositionally biased toward low complexity; that stretch reads PETSPSNEHI…PSSPSSSRSP (63 aa). Residues 1151-1161 are compositionally biased toward basic residues; the sequence is GGGRPRGRPPK. Polar residues-rich tracts occupy residues 1169–1180 and 1371–1389; these read NDIQVTSSSGLA and SKPS…QTTA. The span at 1630-1644 shows a compositional bias: low complexity; that stretch reads STSSSQSASDKSPIK. 2 stretches are compositionally biased toward polar residues: residues 1720-1743 and 1801-1816; these read KAQT…QSSS and VGQT…HDIL. A compositionally biased stretch (low complexity) spans 1817-1839; it reads SSSLPNRSCSSSPSPSKRPYHPS.

Belongs to the herpesviridae ICP4 family. A long stretch of serine residues may be a major site of phosphorylation.

The protein localises to the host nucleus. In terms of biological role, this IE protein is a multifunctional protein capable of migrating to the nucleus, binding to DNA, trans-activating other viral genes, and autoregulating its own synthesis. It is required for the switch from immediate-early to early mode of gene expression. The polypeptide is Major viral transcription factor ICP4 homolog (MDV084) (Gallus gallus (Chicken)).